Here is a 393-residue protein sequence, read N- to C-terminus: NAD(P)H-quinone oxidoreductase subunit H, chloroplastic (393 aa).

The protein belongs to the complex I 49 kDa subunit family. As to quaternary structure, NDH is composed of at least 16 different subunits, 5 of which are encoded in the nucleus.

Its subcellular location is the plastid. It localises to the chloroplast thylakoid membrane. The catalysed reaction is a plastoquinone + NADH + (n+1) H(+)(in) = a plastoquinol + NAD(+) + n H(+)(out). It catalyses the reaction a plastoquinone + NADPH + (n+1) H(+)(in) = a plastoquinol + NADP(+) + n H(+)(out). In terms of biological role, NDH shuttles electrons from NAD(P)H:plastoquinone, via FMN and iron-sulfur (Fe-S) centers, to quinones in the photosynthetic chain and possibly in a chloroplast respiratory chain. The immediate electron acceptor for the enzyme in this species is believed to be plastoquinone. Couples the redox reaction to proton translocation, and thus conserves the redox energy in a proton gradient. The chain is NAD(P)H-quinone oxidoreductase subunit H, chloroplastic from Panax ginseng (Korean ginseng).